A 275-amino-acid chain; its full sequence is MTELQQIIEAAFERRDSITPGSVDAATKAAILQAIDLLDSGKARVAEKIAGEWVVHQWLKKAVLLYFRINDNGIIKGDDAQYYDKVPLKFSDYSAEQFKAAGVRVVPPATARKGSFIAPNTVLMPSYVNIGAFVDEGTMVDTWATVGSCAQIGKNVHLSGGVGIGGVLEPLQANPTIIEDNCFIGARSEVVEGVIVEEGSVISMGVFIGQSTRIYDRETGEIHYGRVPAGSVVVSGSLPSKCGKYSLYAAVIVKKVDAKTRAKVGINALLRSIDE.

The substrate site is built by Arg-104 and Asp-141.

The protein belongs to the transferase hexapeptide repeat family. As to quaternary structure, homotrimer.

The protein resides in the cytoplasm. The catalysed reaction is (S)-2,3,4,5-tetrahydrodipicolinate + succinyl-CoA + H2O = (S)-2-succinylamino-6-oxoheptanedioate + CoA. The protein operates within amino-acid biosynthesis; L-lysine biosynthesis via DAP pathway; LL-2,6-diaminopimelate from (S)-tetrahydrodipicolinate (succinylase route): step 1/3. This is 2,3,4,5-tetrahydropyridine-2,6-dicarboxylate N-succinyltransferase from Aeromonas hydrophila subsp. hydrophila (strain ATCC 7966 / DSM 30187 / BCRC 13018 / CCUG 14551 / JCM 1027 / KCTC 2358 / NCIMB 9240 / NCTC 8049).